A 222-amino-acid polypeptide reads, in one-letter code: Adenylate kinase (222 aa).

ATP is bound at residue 10 to 15; sequence GAGKGT. The NMP stretch occupies residues 30-59; that stretch reads STGDMLRAAVKAGTPLGIEAKKVMDAGGLV. AMP contacts are provided by residues T31, R36, 57–59, 85–88, and Q92; these read GLV and GFPR. Positions 122–159 are LID; that stretch reads GRRVHVASGRTYHVKYNPPKNEGQDDETGDPLIQRDDD. Residues R123 and 132-133 each bind ATP; that span reads TY. Residues 135 to 162 are disordered; the sequence is VKYNPPKNEGQDDETGDPLIQRDDDKEE. AMP is bound by residues R156 and R167. G207 contributes to the ATP binding site.

It belongs to the adenylate kinase family. Monomer.

It localises to the cytoplasm. The catalysed reaction is AMP + ATP = 2 ADP. Its pathway is purine metabolism; AMP biosynthesis via salvage pathway; AMP from ADP: step 1/1. Functionally, catalyzes the reversible transfer of the terminal phosphate group between ATP and AMP. Plays an important role in cellular energy homeostasis and in adenine nucleotide metabolism. This chain is Adenylate kinase, found in Ralstonia nicotianae (strain ATCC BAA-1114 / GMI1000) (Ralstonia solanacearum).